Consider the following 660-residue polypeptide: DNA polymerase alpha-associated DNA helicase A (660 aa).

232 to 239 (GPPGTGKT) serves as a coordination point for ATP.

It belongs to the DNA2/NAM7 helicase family. Associates with the hexameric DNA polymerase alpha.

It localises to the cytoplasm. The protein localises to the nucleus. The catalysed reaction is ATP + H2O = ADP + phosphate + H(+). Functionally, DNA polymerase alpha-associated DNA helicase which may be involved in DNA replication. This Schizosaccharomyces pombe (strain 972 / ATCC 24843) (Fission yeast) protein is DNA polymerase alpha-associated DNA helicase A (hcs1).